A 143-amino-acid chain; its full sequence is Transcriptional regulator MraZ (143 aa).

SpoVT-AbrB domains follow at residues glutamine 5 to glutamate 47 and alanine 76 to valine 119.

The protein belongs to the MraZ family. As to quaternary structure, forms oligomers.

The protein localises to the cytoplasm. Its subcellular location is the nucleoid. In Thermoanaerobacter pseudethanolicus (strain ATCC 33223 / 39E) (Clostridium thermohydrosulfuricum), this protein is Transcriptional regulator MraZ.